The sequence spans 518 residues: Membrane-bound glycerophospholipid O-acyltransferase 2 (518 aa).

The next 6 membrane-spanning stretches (helical) occupy residues 21–41 (PVDQ…AIWF), 60–80 (TLLG…HFVI), 87–107 (YLMI…FALG), 183–203 (FMGI…FIEG), 230–250 (IAVA…MTIT), and 267–283 (ASWP…LMAA). Active-site residues include Asn341 and His372. Transmembrane regions (helical) follow at residues 365–385 (FILS…FLTG), 415–435 (IITW…FVLL), and 443–463 (FYSS…LVFP).

It belongs to the membrane-bound acyltransferase family.

The protein resides in the endoplasmic reticulum membrane. It carries out the reaction a 1-acyl-sn-glycero-3-phosphocholine + an acyl-CoA = a 1,2-diacyl-sn-glycero-3-phosphocholine + CoA. The catalysed reaction is a 1-acyl-sn-glycero-3-phosphoethanolamine + an acyl-CoA = a 1,2-diacyl-sn-glycero-3-phosphoethanolamine + CoA. The enzyme catalyses a 1-acyl-sn-glycero-3-phosphate + an acyl-CoA = a 1,2-diacyl-sn-glycero-3-phosphate + CoA. It catalyses the reaction (9Z)-hexadecenoyl-CoA + 1-hexadecanoyl-sn-glycero-3-phosphocholine = 1-hexadecanoyl-2-(9Z-hexadecenoyl)-sn-glycero-3-phosphocholine + CoA. It carries out the reaction 1-hexadecanoyl-sn-glycero-3-phosphoethanolamine + (9Z)-octadecenoyl-CoA = 1-hexadecanoyl-2-(9Z-octadecenoyl)-sn-glycero-3-phosphoethanolamine + CoA. The catalysed reaction is 1-hexadecanoyl-sn-glycero-3-phosphoethanolamine + (9Z)-hexadecenoyl-CoA = 1-hexadecanoyl-2-(9Z)-hexadecenoyl-sn-glycero-3-phosphoethanolamine + CoA. The enzyme catalyses 1-(9Z-octadecenoyl)-sn-glycero-3-phospho-L-serine + hexadecanoyl-CoA = 1-(9Z)-octadecenoyl-2-hexadecanoyl-sn-glycero-3-phosphoserine + CoA. It catalyses the reaction (9Z,12Z)-octadecadienoyl-CoA + 1-hexadecanoyl-sn-glycero-3-phosphocholine = 1-hexadecanoyl-2-(9Z,12Z-octadecadienoyl)-sn-glycero-3-phosphocholine + CoA. It carries out the reaction 1-hexadecanoyl-sn-glycero-3-phosphocholine + (9Z)-octadecenoyl-CoA = 1-hexadecanoyl-2-(9Z-octadecenoyl)-sn-glycero-3-phosphocholine + CoA. The catalysed reaction is 1-hexadecanoyl-sn-glycero-3-phosphate + (9Z)-hexadecenoyl-CoA = 1-hexadecanoyl-2-[(9Z)-hexadec-9-enoyl]-sn-glycero-3-phosphate + CoA. The enzyme catalyses 1-hexadecanoyl-sn-glycero-3-phosphate + (9Z)-octadecenoyl-CoA = 1-hexadecanoyl-2-(9Z-octadecenoyl)-sn-glycero-3-phosphate + CoA. It catalyses the reaction a 1-O-(1Z-alkenyl)-sn-glycero-3-phosphocholine + (9Z)-octadecenoyl-CoA = 1-O-(1Z)-alkenyl-2-(9Z)-octadecenoyl-sn-glycero-3-phosphocholine + CoA. It carries out the reaction a 1-O-(1Z-alkenyl)-sn-glycero-3-phosphoethanolamine + (9Z)-octadecenoyl-CoA = 1-O-(1Z)-alkenyl-2-(9Z)-octadecenoyl-sn-glycero-3-phosphoethanolamine + CoA. The catalysed reaction is 1-octadecanoyl-sn-glycero-3-phosphoethanolamine + (9Z)-octadecenoyl-CoA = 1-octadecanoyl-2-(9Z-octadecenoyl)-sn-glycero-3-phosphoethanolamine + CoA. The enzyme catalyses 1-octadecanoyl-sn-glycero-3-phosphocholine + (9Z)-octadecenoyl-CoA = 1-octadecanoyl-2-(9Z-octadecenoyl)-sn-glycero-3-phosphocholine + CoA. It catalyses the reaction 1-(9Z-octadecenoyl)-sn-glycero-3-phosphoethanolamine + (9Z)-octadecenoyl-CoA = 1,2-di-(9Z-octadecenoyl)-sn-glycero-3-phosphoethanolamine + CoA. The protein operates within lipid metabolism; phospholipid metabolism. Its function is as follows. Acyltransferase which catalyzes the transfer of an acyl group from an acyl-CoA to a lysophospholipid leading to the production of a phospholipid and participates in the reacylation step of the phospholipid remodeling pathway also known as the Lands cycle. May catalyze preferentially the acylation of lysophosphatidylethanolamine (1-acyl-sn-glycero-3-phosphoethanolamine or LPE) and lysophosphatidic acid (LPA) and to a lesser extend lysophosphatidylcholine (LPC) and lysophosphatidylserine (LPS). Prefers oleoyl-CoA as the acyl donor. This Gallus gallus (Chicken) protein is Membrane-bound glycerophospholipid O-acyltransferase 2.